Consider the following 235-residue polypeptide: uncharacterized protein (235 aa).

The next 3 helical transmembrane spans lie at 41 to 61 (IFWH…IYRL), 71 to 91 (LRTF…IEFP), and 129 to 149 (IGII…TPTI).

It localises to the membrane. This is an uncharacterized protein from Schizosaccharomyces pombe (strain 972 / ATCC 24843) (Fission yeast).